A 296-amino-acid polypeptide reads, in one-letter code: tRNA dimethylallyltransferase (296 aa).

An ATP-binding site is contributed by G9 to S16. T11–S16 is a substrate binding site. The interval D34–A37 is interaction with substrate tRNA.

The protein belongs to the IPP transferase family. In terms of assembly, monomer. It depends on Mg(2+) as a cofactor.

The enzyme catalyses adenosine(37) in tRNA + dimethylallyl diphosphate = N(6)-dimethylallyladenosine(37) in tRNA + diphosphate. Catalyzes the transfer of a dimethylallyl group onto the adenine at position 37 in tRNAs that read codons beginning with uridine, leading to the formation of N6-(dimethylallyl)adenosine (i(6)A). This Campylobacter curvus (strain 525.92) protein is tRNA dimethylallyltransferase.